We begin with the raw amino-acid sequence, 245 residues long: Acetylglutamate kinase (245 aa).

Residues 41-42 (GG), R63, and N156 each bind substrate.

This sequence belongs to the acetylglutamate kinase family. ArgB subfamily.

Its subcellular location is the cytoplasm. The enzyme catalyses N-acetyl-L-glutamate + ATP = N-acetyl-L-glutamyl 5-phosphate + ADP. The protein operates within amino-acid biosynthesis; L-arginine biosynthesis; N(2)-acetyl-L-ornithine from L-glutamate: step 2/4. Catalyzes the ATP-dependent phosphorylation of N-acetyl-L-glutamate. The polypeptide is Acetylglutamate kinase (Leuconostoc citreum (strain KM20)).